Reading from the N-terminus, the 239-residue chain is Protein NtpR (239 aa).

A Glutamine amidotransferase type-1 domain is found at 12–239 (LIRATDTFQG…GLFDFFVQEF (228 aa)). Cysteine 113 acts as the Nucleophile in catalysis. Residues histidine 217 and glutamate 219 contribute to the active site.

The sequence is that of Protein NtpR (ntpR) from Enterococcus hirae (strain ATCC 9790 / DSM 20160 / JCM 8729 / LMG 6399 / NBRC 3181 / NCIMB 6459 / NCDO 1258 / NCTC 12367 / WDCM 00089 / R).